The following is a 44-amino-acid chain: Large ribosomal subunit protein bL34 (44 aa).

Basic residues-rich tracts occupy residues 1–22 (MKRTLGGTSRKRKRTSGFRARM) and 31–44 (IRARRKKGRHRLSV). The disordered stretch occupies residues 1–44 (MKRTLGGTSRKRKRTSGFRARMRTPDGRNVIRARRKKGRHRLSV).

It belongs to the bacterial ribosomal protein bL34 family.

This Nostoc punctiforme (strain ATCC 29133 / PCC 73102) protein is Large ribosomal subunit protein bL34.